The following is a 66-amino-acid chain: Small ribosomal subunit protein eS30 (66 aa).

A disordered region spans residues Met1–Lys35.

Belongs to the eukaryotic ribosomal protein eS30 family.

This is Small ribosomal subunit protein eS30 (rps30-1) from Dictyostelium discoideum (Social amoeba).